A 385-amino-acid polypeptide reads, in one-letter code: Xanthosine methyltransferase 2 (385 aa).

An S-adenosyl-L-homocysteine-binding site is contributed by tyrosine 18. Xanthosine contacts are provided by asparagine 21 and asparagine 25. S-adenosyl-L-homocysteine-binding residues include cysteine 62, asparagine 67, aspartate 101, leucine 102, serine 140, phenylalanine 141, and cysteine 157. Residue tyrosine 158 coordinates xanthosine. Cysteine 159 lines the S-adenosyl-L-homocysteine pocket. The xanthosine site is built by histidine 161 and tryptophan 162. Asparagine 179, aspartate 261, phenylalanine 263, and asparagine 264 together coordinate Mg(2+). Xanthosine is bound by residues serine 329, tyrosine 334, and tyrosine 369.

It belongs to the methyltransferase superfamily. Type-7 methyltransferase family. It depends on Mg(2+) as a cofactor. In terms of tissue distribution, expressed at low levels in young leaves but not in mature leaves. Barely detectable in fruits (grains).

It carries out the reaction xanthosine + S-adenosyl-L-methionine = 7-methylxanthosine + S-adenosyl-L-homocysteine. Its pathway is alkaloid biosynthesis. Involved in the biosynthesis of caffeine. Specific for xanthosine and could not use xanthosine 5'-monophosphate (XMP) as substrate. Catalyzes the 7-N-methylation activity of xanthosine, but does not have 1-N- or 3-N-methylation activity. The sequence is that of Xanthosine methyltransferase 2 from Coffea arabica (Arabian coffee).